The following is a 266-amino-acid chain: Outer kinetochore KNL1 complex subunit ZWINT (266 aa).

A disordered region spans residues 95 to 115 (DQNPDALASEDTSRQKATETK). Basic and acidic residues predominate over residues 105-115 (DTSRQKATETK). A coiled-coil region spans residues 136–237 (LSEALPQVKE…QRNQSYLQLL (102 aa)). Residues serine 232 and serine 265 each carry the phosphoserine modification.

As to quaternary structure, component of the KNL1 complex composed of KNL1 and ZWINT. Part of the ten-subunit outer kinetochore KMN network that includes the KNL1, MIS12 and NDC80 complexes; a bioriented kinetochore contains approximately 150 copies of the network. Interacts with the MIS12 complex subunits MIS12 DSN1, and PMF1. Interacts with the NDC80 complex subunit NDC80 during mitosis. Interacts with ZW10. Interacts with CETN3. In terms of tissue distribution, expressed abundantly in brain and at lower levels in testis and kidney.

It is found in the nucleus. The protein resides in the chromosome. It localises to the centromere. Its subcellular location is the kinetochore. Acts as a component of the outer kinetochore KNL1 complex that serves as a docking point for spindle assembly checkpoint components and mediates microtubule-kinetochore interactions. Kinetochores, consisting of a centromere-associated inner segment and a microtubule-contacting outer segment, play a crucial role in chromosome segregation by mediating the physical connection between centromeric DNA and spindle microtubules. The outer kinetochore is made up of the ten-subunit KMN network, comprising the MIS12, NDC80 and KNL1 complexes, and auxiliary microtubule-associated components; together they connect the outer kinetochore with the inner kinetochore, bind microtubules, and mediate interactions with mitotic checkpoint proteins that delay anaphase until chromosomes are bioriented on the spindle. Targets the RZZ complex to the kinetochore at prometaphase. Recruits MAD2L1 to the kinetochore, but is not required for BUB1B localization. In addition to orienting mitotic chromosomes, it is also essential for alignment of homologous chromosomes during meiotic metaphase I. In meiosis I, required to activate the spindle assembly checkpoint at unattached kinetochores to correct erroneous kinetochore-microtubule attachments. The sequence is that of Outer kinetochore KNL1 complex subunit ZWINT (Zwint) from Rattus norvegicus (Rat).